The chain runs to 272 residues: Adenylate kinase (272 aa).

Gly-55–Thr-60 is a binding site for ATP. Positions Ala-75–Val-104 are NMP. Residues Thr-76, Arg-81, Gly-102–Val-104, Gly-131–Arg-134, and Gln-138 each bind AMP. The LID stretch occupies residues Gly-172–Asp-209. ATP-binding positions include Arg-173 and Ser-182 to Tyr-183. AMP is bound by residues Arg-206 and Arg-217. Gln-245 serves as a coordination point for ATP.

The protein belongs to the adenylate kinase family. AK2 subfamily. Monomer.

Its subcellular location is the cytoplasm. The protein resides in the cytosol. It localises to the mitochondrion intermembrane space. The catalysed reaction is AMP + ATP = 2 ADP. In terms of biological role, catalyzes the reversible transfer of the terminal phosphate group between ATP and AMP. Plays an important role in cellular energy homeostasis and in adenine nucleotide metabolism. Adenylate kinase activity is critical for regulation of the phosphate utilization and the AMP de novo biosynthesis pathways. This chain is Adenylate kinase (adk1), found in Talaromyces marneffei (Penicillium marneffei).